Consider the following 864-residue polypeptide: Probable M1 family aminopeptidase 2 (864 aa).

Substrate contacts are provided by residues E149 and 289-293 (GAMEN). H325 provides a ligand contact to Zn(2+). E326 serves as the catalytic Proton acceptor. 2 residues coordinate Zn(2+): H329 and E348.

The protein belongs to the peptidase M1 family. Zn(2+) serves as cofactor.

This chain is Probable M1 family aminopeptidase 2, found in Encephalitozoon cuniculi (strain GB-M1) (Microsporidian parasite).